A 63-amino-acid polypeptide reads, in one-letter code: Large ribosomal subunit protein uL29 (63 aa).

Belongs to the universal ribosomal protein uL29 family.

This Shewanella loihica (strain ATCC BAA-1088 / PV-4) protein is Large ribosomal subunit protein uL29.